The following is a 239-amino-acid chain: Succinate dehydrogenase [ubiquinone] iron-sulfur subunit (239 aa).

The 76-residue stretch at alanine 24–leucine 99 folds into the 2Fe-2S ferredoxin-type domain. 4 residues coordinate [2Fe-2S] cluster: cysteine 63, cysteine 68, cysteine 71, and cysteine 83. A 4Fe-4S ferredoxin-type domain is found at aspartate 142–tyrosine 172. Cysteine 152, cysteine 155, and cysteine 158 together coordinate [4Fe-4S] cluster. Cysteine 162 is a [3Fe-4S] cluster binding site. Position 167 (tryptophan 167) interacts with a ubiquinone. [3Fe-4S] cluster-binding residues include cysteine 209 and cysteine 215. Cysteine 219 contributes to the [4Fe-4S] cluster binding site.

The protein belongs to the succinate dehydrogenase/fumarate reductase iron-sulfur protein family. As to quaternary structure, component of complex II composed of four subunits: a flavoprotein (FP), an iron-sulfur protein (IP), and a cytochrome b composed of a large and a small subunit. The cofactor is [2Fe-2S] cluster. Requires [3Fe-4S] cluster as cofactor. [4Fe-4S] cluster is required as a cofactor.

It is found in the mitochondrion inner membrane. It catalyses the reaction a quinone + succinate = fumarate + a quinol. It functions in the pathway carbohydrate metabolism; tricarboxylic acid cycle; fumarate from succinate (eukaryal route): step 1/1. Functionally, iron-sulfur protein (IP) subunit of succinate dehydrogenase (SDH) that is involved in complex II of the mitochondrial electron transport chain and is responsible for transferring electrons from succinate to ubiquinone (coenzyme Q). The sequence is that of Succinate dehydrogenase [ubiquinone] iron-sulfur subunit (SDH2) from Porphyra purpurea (Red seaweed).